A 279-amino-acid polypeptide reads, in one-letter code: Energy-coupling factor transporter ATP-binding protein EcfA1 (279 aa).

The ABC transporter domain maps to 5–240 (IELNNIQFNY…GEALVEMGLD (236 aa)). Residue 40-47 (GHNGSGKS) participates in ATP binding.

Belongs to the ABC transporter superfamily. Energy-coupling factor EcfA family. As to quaternary structure, forms a stable energy-coupling factor (ECF) transporter complex composed of 2 membrane-embedded substrate-binding proteins (S component), 2 ATP-binding proteins (A component) and 2 transmembrane proteins (T component).

Its subcellular location is the cell membrane. In terms of biological role, ATP-binding (A) component of a common energy-coupling factor (ECF) ABC-transporter complex. Unlike classic ABC transporters this ECF transporter provides the energy necessary to transport a number of different substrates. The sequence is that of Energy-coupling factor transporter ATP-binding protein EcfA1 from Enterococcus faecalis (strain ATCC 700802 / V583).